Reading from the N-terminus, the 509-residue chain is Light-independent protochlorophyllide reductase subunit B (509 aa).

Residue Asp36 participates in [4Fe-4S] cluster binding. The active-site Proton donor is the Asp295. Residue 430 to 431 (GM) participates in substrate binding.

It belongs to the ChlB/BchB/BchZ family. In terms of assembly, protochlorophyllide reductase is composed of three subunits; ChlL, ChlN and ChlB. Forms a heterotetramer of two ChlB and two ChlN subunits. The cofactor is [4Fe-4S] cluster.

The protein resides in the plastid. Its subcellular location is the chloroplast. The catalysed reaction is chlorophyllide a + oxidized 2[4Fe-4S]-[ferredoxin] + 2 ADP + 2 phosphate = protochlorophyllide a + reduced 2[4Fe-4S]-[ferredoxin] + 2 ATP + 2 H2O. It participates in porphyrin-containing compound metabolism; chlorophyll biosynthesis (light-independent). Its function is as follows. Component of the dark-operative protochlorophyllide reductase (DPOR) that uses Mg-ATP and reduced ferredoxin to reduce ring D of protochlorophyllide (Pchlide) to form chlorophyllide a (Chlide). This reaction is light-independent. The NB-protein (ChlN-ChlB) is the catalytic component of the complex. This is Light-independent protochlorophyllide reductase subunit B from Mesostigma viride (Green alga).